The primary structure comprises 453 residues: Mitochondrial import inner membrane translocase subunit TIM44 (453 aa).

At threonine 129 the chain carries Phosphothreonine. 167-174 (GGEKLGKT) lines the ATP pocket. Residue lysine 178 is modified to N6-succinyllysine. A Phosphoserine modification is found at serine 181. Lysine 218 is modified (N6-succinyllysine).

The protein belongs to the Tim44 family. Probable component of the PAM complex at least composed of a mitochondrial HSP70 protein, GRPEL1 or GRPEL2, TIMM44, TIMM16/PAM16 and TIMM14/DNAJC19. The complex interacts with the TIMM23 component of the TIM23 complex. Interacts with SLC25A4/ANT1 and SLC25A5/ANT2; leading to inhibit the presequence translocase TIMM23, thereby promoting stabilization of PINK1.

The protein localises to the mitochondrion inner membrane. It localises to the mitochondrion matrix. Functionally, essential component of the PAM complex, a complex required for the translocation of transit peptide-containing proteins from the inner membrane into the mitochondrial matrix in an ATP-dependent manner. Recruits mitochondrial HSP70 to drive protein translocation into the matrix using ATP as an energy source. The protein is Mitochondrial import inner membrane translocase subunit TIM44 (Timm44) of Rattus norvegicus (Rat).